A 522-amino-acid chain; its full sequence is Cytochrome P450 714C2 (522 aa).

At 1 to 11 (MELFSSQQWLA) the chain is on the lumenal side. The chain crosses the membrane as a helical; Signal-anchor for type III membrane protein span at residues 12-32 (LLPPIILCILLFSYVYIILWL). The Cytoplasmic portion of the chain corresponds to 33-522 (RPERLRQKLR…KGVPLIFREL (490 aa)). Residue cysteine 470 coordinates heme.

The protein belongs to the cytochrome P450 family. Heme is required as a cofactor.

Its subcellular location is the membrane. Functionally, probably not involved in gibberellin metabolism since over-expression of CYP714C2 in a heterologous system does not induce semi-dwarfism. The polypeptide is Cytochrome P450 714C2 (CYP714C2) (Oryza sativa subsp. japonica (Rice)).